A 154-amino-acid chain; its full sequence is Endoribonuclease YbeY (154 aa).

3 residues coordinate Zn(2+): H114, H118, and H124.

The protein belongs to the endoribonuclease YbeY family. It depends on Zn(2+) as a cofactor.

Its subcellular location is the cytoplasm. In terms of biological role, single strand-specific metallo-endoribonuclease involved in late-stage 70S ribosome quality control and in maturation of the 3' terminus of the 16S rRNA. The sequence is that of Endoribonuclease YbeY from Anaplasma phagocytophilum (strain HZ).